We begin with the raw amino-acid sequence, 123 residues long: Snaclec GPIB-binding protein subunit beta (123 aa).

3 disulfides stabilise this stretch: cysteine 2/cysteine 13, cysteine 30/cysteine 119, and cysteine 96/cysteine 111. The C-type lectin domain maps to 9–120; that stretch reads YGGHCYKLFK…CTRLQYFVCE (112 aa).

This sequence belongs to the snaclec family. As to quaternary structure, heterodimer of subunits alpha and beta; disulfide-linked. As to expression, expressed by the venom gland.

It is found in the secreted. Binds to platelet GPIb (subunit alpha) (GP1BA) and functions as a receptor blocker for vWF binding to GPIb. The platelet GPIb-binding site resides on the GPIB-BP subunit beta and not on the alpha subunit. At a final concentration of 104 nM totally abolishes vWF-dependent shear-induced platelet aggregation (SIPA) at a high shear stress, but had no effect on SIPA at a low shear stress. This is Snaclec GPIB-binding protein subunit beta from Bothrops jararaca (Jararaca).